We begin with the raw amino-acid sequence, 56 residues long: Endoregulin (56 aa).

A helical membrane pass occupies residues 25 to 45 (LTVIGLFTSTFLLFVLFAVVF).

Homooligomer. Can also form heterooligomers with other sarcoplasmic/endoplasmic reticulum calcium ATPase (SERCA) regulators ARLN, PLN, SLN and STRIT1/DWORF. Monomer. Interacts as a monomer with ATP2A2/SERCA2; the interaction results in inhibition of ATP2A2 Ca(2+) affinity. Largely expressed in non-muscle tissues with the exception of weak expression in body wall muscles at 14.5 dpc. Expressed in epithelial cells of the trachea, bronchus, lung, intestine, pancreas, and liver.

It is found in the endoplasmic reticulum membrane. Its function is as follows. Inhibits the activity of the calcium ATPases ATP2A2/SERCA2 and ATP2A3/SERCA3 by decreasing their apparent affinity for Ca(2+). The protein is Endoregulin (Erln) of Mus musculus (Mouse).